A 549-amino-acid polypeptide reads, in one-letter code: Glucose-6-phosphate isomerase 1 (549 aa).

Glu-358 acts as the Proton donor in catalysis. Active-site residues include His-389 and Lys-513.

It belongs to the GPI family.

The protein localises to the cytoplasm. The catalysed reaction is alpha-D-glucose 6-phosphate = beta-D-fructose 6-phosphate. Its pathway is carbohydrate biosynthesis; gluconeogenesis. It functions in the pathway carbohydrate degradation; glycolysis; D-glyceraldehyde 3-phosphate and glycerone phosphate from D-glucose: step 2/4. Catalyzes the reversible isomerization of glucose-6-phosphate to fructose-6-phosphate. This is Glucose-6-phosphate isomerase 1 from Streptomyces avermitilis (strain ATCC 31267 / DSM 46492 / JCM 5070 / NBRC 14893 / NCIMB 12804 / NRRL 8165 / MA-4680).